We begin with the raw amino-acid sequence, 130 residues long: Glycine cleavage system H protein (130 aa).

One can recognise a Lipoyl-binding domain in the interval 22-103; the sequence is KAYIGISDCA…PYGSWIAAIE (82 aa). The residue at position 63 (K63) is an N6-lipoyllysine.

This sequence belongs to the GcvH family. As to quaternary structure, the glycine cleavage system is composed of four proteins: P, T, L and H. (R)-lipoate is required as a cofactor.

In terms of biological role, the glycine cleavage system catalyzes the degradation of glycine. The H protein shuttles the methylamine group of glycine from the P protein to the T protein. The chain is Glycine cleavage system H protein from Clostridium botulinum (strain ATCC 19397 / Type A).